The following is a 129-amino-acid chain: Small ribosomal subunit protein uS11 (129 aa).

It belongs to the universal ribosomal protein uS11 family. Part of the 30S ribosomal subunit. Interacts with proteins S7 and S18. Binds to IF-3.

Located on the platform of the 30S subunit, it bridges several disparate RNA helices of the 16S rRNA. Forms part of the Shine-Dalgarno cleft in the 70S ribosome. The protein is Small ribosomal subunit protein uS11 of Pseudomonas putida (strain GB-1).